The primary structure comprises 235 residues: MPRFCYSRSGALLLALLLQTSIDVWSWCLESSQCQDLTTESNLLACIRACKLDLSLETPVFPGNGDEQPLTENPRKYVMGHFRWDRFGPRNSSSAGSAAQRRAEEEAVWGDGSPEPSPREGKRSYSMEHFRWGKPVGKKRRPVKVYPNVAENESAEAFPLEFKRELEGERPLGLEQVLESDAEKDDGPYRVEHFRWSNPPKDKRYGGFMTSEKSQTPLVTLFKNAIIKNAHKKGQ.

The first 26 residues, 1–26, serve as a signal peptide directing secretion; it reads MPRFCYSRSGALLLALLLQTSIDVWS. F87 is modified (phenylalanine amide). The disordered stretch occupies residues 88–126; the sequence is GPRNSSSAGSAAQRRAEEEAVWGDGSPEPSPREGKRSYS. Residues 90 to 100 show a composition bias toward low complexity; it reads RNSSSAGSAAQ. N91 carries N-linked (GlcNAc...) asparagine glycosylation. A propeptide spanning residues 103–121 is cleaved from the precursor; that stretch reads AEEEAVWGDGSPEPSPREG. Positions 117–126 are enriched in basic and acidic residues; that stretch reads SPREGKRSYS. At S124 the chain carries N-acetylserine; in Corticotropin. The residue at position 136 (V136) is a Valine amide. N152 carries an N-linked (GlcNAc...) asparagine glycan. The residue at position 154 (S154) is a Phosphoserine. The tract at residues 179 to 210 is disordered; the sequence is ESDAEKDDGPYRVEHFRWSNPPKDKRYGGFMT. Residues 185 to 205 are compositionally biased toward basic and acidic residues; the sequence is DDGPYRVEHFRWSNPPKDKRY.

Belongs to the POMC family. Specific enzymatic cleavages at paired basic residues yield the different active peptides. ACTH and MSH are produced by the pituitary gland.

It localises to the secreted. In terms of biological role, stimulates the adrenal glands to release cortisol. Its function is as follows. Anorexigenic peptide. Increases the pigmentation of skin by increasing melanin production in melanocytes. Functionally, increases the pigmentation of skin by increasing melanin production in melanocytes. Endogenous orexigenic opiate. In terms of biological role, endogenous opiate. This Mus musculus (Mouse) protein is Pro-opiomelanocortin (Pomc).